The sequence spans 179 residues: Large ribosomal subunit protein uL5 (179 aa).

Belongs to the universal ribosomal protein uL5 family. As to quaternary structure, part of the 50S ribosomal subunit; part of the 5S rRNA/L5/L18/L25 subcomplex. Contacts the 5S rRNA and the P site tRNA. Forms a bridge to the 30S subunit in the 70S ribosome.

Functionally, this is one of the proteins that bind and probably mediate the attachment of the 5S RNA into the large ribosomal subunit, where it forms part of the central protuberance. In the 70S ribosome it contacts protein S13 of the 30S subunit (bridge B1b), connecting the 2 subunits; this bridge is implicated in subunit movement. Contacts the P site tRNA; the 5S rRNA and some of its associated proteins might help stabilize positioning of ribosome-bound tRNAs. The chain is Large ribosomal subunit protein uL5 from Stutzerimonas stutzeri (strain A1501) (Pseudomonas stutzeri).